The primary structure comprises 330 residues: MSQQIHLSIDAMGGDQGPRLVIEASIAFLKRYPHTRLTLFGDFADLEAAVKGSVCASRMSLIQTEITVAADERAGSALRHKQGSSMWKAVELVATGQADACVSGGNTGALMAMGRKLIKTFPGVSRPAICKPIPTARGSSFILDLGANLNCSAQQLVQFALMGSALARVYGRENPSVALLNVGTELSKGSESILTAAALMREHPTINFAGFVEGHGLYQGEVDVVVCDGLIGNVALKVSEGVAAFIASSLKAKLRENRFNQIAGLIVEPLLRRWMAAYNPSNFNGAAMLGLQRTLVKSHGGTDKFGFEQALVAAVDQVSANIPERIAQCL.

Belongs to the PlsX family. As to quaternary structure, homodimer. Probably interacts with PlsY.

It is found in the cytoplasm. The catalysed reaction is a fatty acyl-[ACP] + phosphate = an acyl phosphate + holo-[ACP]. The protein operates within lipid metabolism; phospholipid metabolism. Functionally, catalyzes the reversible formation of acyl-phosphate (acyl-PO(4)) from acyl-[acyl-carrier-protein] (acyl-ACP). This enzyme utilizes acyl-ACP as fatty acyl donor, but not acyl-CoA. This is Phosphate acyltransferase from Teredinibacter turnerae (strain ATCC 39867 / T7901).